The primary structure comprises 414 residues: Cell division protein FtsA (414 aa).

Belongs to the FtsA/MreB family. Self-interacts. Interacts with FtsZ.

Its subcellular location is the cell inner membrane. Cell division protein that is involved in the assembly of the Z ring. May serve as a membrane anchor for the Z ring. The sequence is that of Cell division protein FtsA from Neisseria meningitidis serogroup B (strain ATCC BAA-335 / MC58).